We begin with the raw amino-acid sequence, 309 residues long: Dihydroorotate dehydrogenase B (NAD(+)), catalytic subunit (309 aa).

Residues S21 and 45–46 each bind FMN; that span reads KA. Residues K45 and 69-73 contribute to the substrate site; that span reads NAIGL. 2 residues coordinate FMN: N99 and N127. N127 lines the substrate pocket. Catalysis depends on C130, which acts as the Nucleophile. K165 and I191 together coordinate FMN. 192–193 lines the substrate pocket; sequence NT. FMN-binding positions include G217, 243 to 244, and 265 to 266; these read GG and GT.

It belongs to the dihydroorotate dehydrogenase family. Type 1 subfamily. Heterotetramer of 2 PyrK and 2 PyrD type B subunits. The cofactor is FMN.

It localises to the cytoplasm. The catalysed reaction is (S)-dihydroorotate + NAD(+) = orotate + NADH + H(+). It functions in the pathway pyrimidine metabolism; UMP biosynthesis via de novo pathway; orotate from (S)-dihydroorotate (NAD(+) route): step 1/1. In terms of biological role, catalyzes the conversion of dihydroorotate to orotate with NAD(+) as electron acceptor. In Bacillus cytotoxicus (strain DSM 22905 / CIP 110041 / 391-98 / NVH 391-98), this protein is Dihydroorotate dehydrogenase B (NAD(+)), catalytic subunit (pyrD).